Consider the following 320-residue polypeptide: Small ribosomal subunit protein uS2 (320 aa).

The disordered stretch occupies residues 254–320; it reads GDAAKAALPV…APATTGPVSE (67 aa). Positions 272 to 282 are enriched in basic and acidic residues; it reads VSAKNEAKSDD. Residues 308 to 320 are compositionally biased toward low complexity; sequence AEAAPATTGPVSE.

The protein belongs to the universal ribosomal protein uS2 family.

In Clavibacter sepedonicus (Clavibacter michiganensis subsp. sepedonicus), this protein is Small ribosomal subunit protein uS2.